We begin with the raw amino-acid sequence, 131 residues long: UPF0102 protein RALTA_A3032 (131 aa).

Positions 1-12 (MMRSFKSTQEPS) are enriched in polar residues. The segment at 1-21 (MMRSFKSTQEPSRQARGAQAE) is disordered.

This sequence belongs to the UPF0102 family.

The protein is UPF0102 protein RALTA_A3032 of Cupriavidus taiwanensis (strain DSM 17343 / BCRC 17206 / CCUG 44338 / CIP 107171 / LMG 19424 / R1) (Ralstonia taiwanensis (strain LMG 19424)).